Reading from the N-terminus, the 340-residue chain is Methionine import ATP-binding protein MetN (340 aa).

In terms of domain architecture, ABC transporter spans 5–243; sequence IEFRGVTKSF…PQTTTARRFV (239 aa). Residue 40 to 47 participates in ATP binding; that stretch reads GYSGAGKS.

This sequence belongs to the ABC transporter superfamily. Methionine importer (TC 3.A.1.24) family. As to quaternary structure, the complex is composed of two ATP-binding proteins (MetN), two transmembrane proteins (MetI) and a solute-binding protein (MetQ).

Its subcellular location is the cell membrane. It carries out the reaction L-methionine(out) + ATP + H2O = L-methionine(in) + ADP + phosphate + H(+). The catalysed reaction is D-methionine(out) + ATP + H2O = D-methionine(in) + ADP + phosphate + H(+). Its function is as follows. Part of the ABC transporter complex MetNIQ involved in methionine import. Responsible for energy coupling to the transport system. The chain is Methionine import ATP-binding protein MetN from Leifsonia xyli subsp. xyli (strain CTCB07).